A 353-amino-acid chain; its full sequence is DNA polymerase IV (353 aa).

One can recognise a UmuC domain in the interval 14 to 198 (IIHIDMDAFF…MDISKFHGVG (185 aa)). Asp18 and Asp116 together coordinate Mg(2+). Glu117 is an active-site residue.

The protein belongs to the DNA polymerase type-Y family. As to quaternary structure, monomer. It depends on Mg(2+) as a cofactor.

The protein resides in the cytoplasm. It catalyses the reaction DNA(n) + a 2'-deoxyribonucleoside 5'-triphosphate = DNA(n+1) + diphosphate. Functionally, poorly processive, error-prone DNA polymerase involved in untargeted mutagenesis. Copies undamaged DNA at stalled replication forks, which arise in vivo from mismatched or misaligned primer ends. These misaligned primers can be extended by PolIV. Exhibits no 3'-5' exonuclease (proofreading) activity. May be involved in translesional synthesis, in conjunction with the beta clamp from PolIII. This chain is DNA polymerase IV, found in Streptococcus pneumoniae serotype 4 (strain ATCC BAA-334 / TIGR4).